The primary structure comprises 300 residues: UDP-N-acetylenolpyruvoylglucosamine reductase (300 aa).

One can recognise an FAD-binding PCMH-type domain in the interval 27–192 (KVGGPADYLA…ISAKFALKPG (166 aa)). The active site involves R171. S221 (proton donor) is an active-site residue. E291 is an active-site residue.

The protein belongs to the MurB family. The cofactor is FAD.

It is found in the cytoplasm. It catalyses the reaction UDP-N-acetyl-alpha-D-muramate + NADP(+) = UDP-N-acetyl-3-O-(1-carboxyvinyl)-alpha-D-glucosamine + NADPH + H(+). The protein operates within cell wall biogenesis; peptidoglycan biosynthesis. Cell wall formation. The polypeptide is UDP-N-acetylenolpyruvoylglucosamine reductase (Streptococcus agalactiae serotype Ia (strain ATCC 27591 / A909 / CDC SS700)).